A 207-amino-acid chain; its full sequence is Large ribosomal subunit protein bL25 (207 aa).

The disordered stretch occupies residues 171-207 (EEETVVTVSAPRAEEEPTTTEAPEPEAVHGNDEEPVE). Positions 196–207 (EAVHGNDEEPVE) are enriched in basic and acidic residues.

Belongs to the bacterial ribosomal protein bL25 family. CTC subfamily. In terms of assembly, part of the 50S ribosomal subunit; part of the 5S rRNA/L5/L18/L25 subcomplex. Contacts the 5S rRNA. Binds to the 5S rRNA independently of L5 and L18.

In terms of biological role, this is one of the proteins that binds to the 5S RNA in the ribosome where it forms part of the central protuberance. This Listeria innocua serovar 6a (strain ATCC BAA-680 / CLIP 11262) protein is Large ribosomal subunit protein bL25.